The sequence spans 1905 residues: Low-density lipoprotein receptor-related protein 4 (1905 aa).

The N-terminal stretch at 1–20 (MRRQWGALLLGALLCAHGLA) is a signal peptide. Residues 21-1725 (SSPECACGRS…AAPGEGLHIS (1705 aa)) are Extracellular-facing. LDL-receptor class A domains are found at residues 26–67 (ACGR…DGCI), 70–106 (TCSP…QDCP), 109–144 (ECEE…EQCD), 147–183 (KCSD…ENCP), 190–226 (PCNL…SDCS), 230–266 (PCRS…RNCT), 269–305 (MCTA…ENCE), and 311–350 (QCAL…QNCR). Cystine bridges form between C27-C44, C34-C57, C51-C66, C71-C83, C78-C96, C90-C105, C110-C122, C117-C135, C129-C143, C148-C160, C155-C173, C167-C182, C191-C203, C198-C216, C210-C225, C231-C243, C238-C256, C250-C265, C270-C282, C277-C295, C289-C304, C312-C324, C319-C337, C331-C349, C358-C369, C365-C378, C380-C393, C399-C409, C405-C418, and C420-C433. An N-linked (GlcNAc...) asparagine glycan is attached at N264. Residues 354 to 394 (GEENCNVNNGGCAQKCQMVRGAVQCTCHTGYRLTEDGHTCQ) enclose the EGF-like 1; calcium-binding domain. In terms of domain architecture, EGF-like 2; calcium-binding spans 395 to 434 (DVNECAEEGYCSQGCTNSEGAFQCWCETGYELRPDRRSCK). 5 LDL-receptor class B repeats span residues 480 to 522 (ELVF…DWVH), 523 to 565 (DKLY…HPME), 566 to 609 (GTIY…DYAG), 610 to 652 (RRMY…FEDS), and 653 to 693 (LYWT…LHPQ). Residue N498 is glycosylated (N-linked (GlcNAc...) asparagine). The region spanning 698-737 (GKNRCGDNNGGCTHLCLPSGQNYTCACPTGFRKISSHACA) is the EGF-like 3 domain. Cystine bridges form between C702–C713, C709–C722, and C724–C736. N719 carries an N-linked (GlcNAc...) asparagine glycan. LDL-receptor class B repeat units follow at residues 785–827 (DHVY…DWVT), 828–870 (NKLY…EPMG), 871–914 (GYMY…DYGS), 915–956 (QRLY…LYGE), and 957–998 (RIYW…FHRR). A glycan (N-linked (GlcNAc...) asparagine) is linked at N901. Residue N1077 is glycosylated (N-linked (GlcNAc...) asparagine). 10 LDL-receptor class B repeats span residues 1093–1135 (GKVY…DAIG), 1136–1178 (RKVY…YHEM), 1179–1222 (GFMY…DKAS), 1223–1263 (SQLL…LLDS), 1264–1306 (YIYW…DRAQ), 1397–1439 (GKVY…DWVA), 1440–1482 (RNLY…FPRK), 1483–1526 (GYLF…DYDT), 1527–1568 (RRIY…QDRW), and 1569–1610 (IYWT…SPQR). N-linked (GlcNAc...) asparagine glycosylation is found at N1415 and N1467. The segment at 1659-1686 (PRATGMSEKSPVLPNTPPTTLYSSTTRT) is disordered. A compositionally biased stretch (low complexity) spans 1676–1686 (PTTLYSSTTRT). The helical transmembrane segment at 1726–1746 (YAIGGLLSILLILVVIAALML) threads the bilayer. Topologically, residues 1747 to 1905 (YRHKKSKFTD…ERKLSSESQV (159 aa)) are cytoplasmic. Positions 1766–1769 (NPSY) match the Endocytosis signal motif. A disordered region spans residues 1852 to 1905 (ASSGSLDDTETEQLLQEEQSECSSVHTAATPERRGSLPDTGWKHERKLSSESQV). The span at 1882–1905 (PERRGSLPDTGWKHERKLSSESQV) shows a compositional bias: basic and acidic residues.

Belongs to the LDLR family. As to quaternary structure, homooligomer. Interacts with MUSK; the heterodimer forms an AGRIN receptor complex that binds AGRIN resulting in activation of MUSK. Interacts (via the extracellular domain) with SOST; the interaction facilitates the inhibition of Wnt signaling. Interacts with MESD; the interaction promotes glycosylation of LRP4 and its cell-surface expression. As to expression, expressed in bone; present in osteoblasts and osteocytes. No expression is observed in osteoclast. Expressed in several regions of the brain.

The protein resides in the cell membrane. Its function is as follows. Mediates SOST-dependent inhibition of bone formation. Functions as a specific facilitator of SOST-mediated inhibition of Wnt signaling. Plays a key role in the formation and the maintenance of the neuromuscular junction (NMJ), the synapse between motor neuron and skeletal muscle. Directly binds AGRIN and recruits it to the MUSK signaling complex. Mediates the AGRIN-induced phosphorylation of MUSK, the kinase of the complex. The activation of MUSK in myotubes induces the formation of NMJ by regulating different processes including the transcription of specific genes and the clustering of AChR in the postsynaptic membrane. Alternatively, may be involved in the negative regulation of the canonical Wnt signaling pathway, being able to antagonize the LRP6-mediated activation of this pathway. More generally, has been proposed to function as a cell surface endocytic receptor binding and internalizing extracellular ligands for degradation by lysosomes. May play an essential role in the process of digit differentiation. In Homo sapiens (Human), this protein is Low-density lipoprotein receptor-related protein 4 (LRP4).